A 482-amino-acid polypeptide reads, in one-letter code: BEL1-like homeodomain protein 7 (482 aa).

Residues 118–134 (SKYLKAAQELLDETVNV) are SR/KY domain. Residues 167–238 (ERQELQSKLS…CLRDAISGQI (72 aa)) form a BELL domain region. The homeobox DNA-binding region spans 285-347 (TWRPQRGLPD…NARVRLWKPM (63 aa)). The interval 358 to 401 (DALQENDPNQSSENTPEITEIQELQTESSSNNGHVPGVASSSMR) is disordered. Polar residues predominate over residues 363–401 (NDPNQSSENTPEITEIQELQTESSSNNGHVPGVASSSMR).

This sequence belongs to the TALE/BELL homeobox family. May form heterodimeric complexes with TALE/KNOX proteins.

Its subcellular location is the nucleus. This chain is BEL1-like homeodomain protein 7 (BLH7), found in Arabidopsis thaliana (Mouse-ear cress).